Consider the following 308-residue polypeptide: S-adenosylmethionine-dependent nucleotide dehydratase (308 aa).

In terms of domain architecture, Radical SAM core spans 7–253; sequence SIQELVINFH…WQSYLMINPE (247 aa). The [4Fe-4S] cluster site is built by Cys21, Cys25, and Cys28.

Belongs to the radical SAM superfamily. Viperin family. [4Fe-4S] cluster serves as cofactor.

The catalysed reaction is CTP + AH2 + S-adenosyl-L-methionine = 3'-deoxy-3',4'-didehydro-CTP + 5'-deoxyadenosine + L-methionine + A + H2O + H(+). It carries out the reaction GTP + AH2 + S-adenosyl-L-methionine = 3'-deoxy-3',4'-didehydro-GTP + 5'-deoxyadenosine + L-methionine + A + H2O + H(+). It catalyses the reaction UTP + AH2 + S-adenosyl-L-methionine = 3'-deoxy-3',4'-didehydro-UTP + 5'-deoxyadenosine + L-methionine + A + H2O + H(+). Expression of pVip58 in E.coli (strain MG1655) confers resistance to phages lambda, P1 and T7; delays culture collapse upon infection with T7. Catalyzes the conversion of cytidine triphosphate (CTP) to 3'-deoxy-3',4'-didehydro-CTP (ddhCTP), guanosine triphosphate (GTP) to 3'-deoxy-3',4'-didehydro-GTP (ddhGTP) and uridine triphosphate (UTP) to 3'-deoxy-3',4'-didehydro-UTP (ddhUTP), probably via a SAM-dependent radical mechanism. The modified nucleotide represses transcription from T7 RNA polymerase-directed genes (possibly by acting as chain terminators), strongly suggesting these nucleotides block viral polymerase transcription. This Pseudoalteromonas ulvae protein is S-adenosylmethionine-dependent nucleotide dehydratase.